A 345-amino-acid chain; its full sequence is cAMP-responsive element modulator (345 aa).

One can recognise a KID domain in the interval 88-147 (VQVAAIAETDESAESEGVIDSHKRREILSRRPSYRKILNELSSDVPGVPKIEEERSEEEG). Phosphoserine occurs at positions 102, 129, 271, 274, and 277. The 60-residue stretch at 286-345 (TRKRELRLMKNREAAKECRRRKKEYVKCLESRVAVLEVQNKKLIEELETLKDICSPKTDY) folds into the bZIP domain. Residues 287 to 312 (RKRELRLMKNREAAKECRRRKKEYVK) are basic motif. The tract at residues 314 to 335 (LESRVAVLEVQNKKLIEELETL) is leucine-zipper.

The protein belongs to the bZIP family. In terms of assembly, binds DNA as a dimer. Interacts with FHL5. Interacts with CDC34. May interact with TSSK4. Post-translationally, isoform 9 is ubiquitinated by CDC34 and RAD6B in order to be degraded by the proteasome. Stimulated by phosphorylation. Phosphorylated on Ser-116 by TSSK4 in vitro. As to expression, expressed in testes (round spermatids) (at protein level). Isoform 14 is the major activator form in testes.

The protein localises to the nucleus. It localises to the cytoplasm. Its function is as follows. Transcriptional regulator that binds the cAMP response element (CRE), a sequence present in many viral and cellular promoters. Isoforms are either transcriptional activators or repressors. Plays a role in spermatogenesis and is involved in spermatid maturation. May play a role in the regulation of the circadian clock: acts as a transcriptional repressor of the core circadian component PER1 by directly binding to cAMP response elements in its promoter. The chain is cAMP-responsive element modulator from Homo sapiens (Human).